Consider the following 360-residue polypeptide: Magnesium-protoporphyrin IX monomethyl ester [oxidative] cyclase (360 aa).

Residues M1–D21 are disordered.

The protein belongs to the AcsF family. Requires Fe cation as cofactor.

The enzyme catalyses Mg-protoporphyrin IX 13-monomethyl ester + 3 NADPH + 3 O2 + 2 H(+) = 3,8-divinyl protochlorophyllide a + 3 NADP(+) + 5 H2O. Its pathway is porphyrin-containing compound metabolism; chlorophyll biosynthesis (light-independent). Its function is as follows. Catalyzes the formation of the isocyclic ring in chlorophyll biosynthesis. Mediates the cyclase reaction, which results in the formation of divinylprotochlorophyllide (Pchlide) characteristic of all chlorophylls from magnesium-protoporphyrin IX 13-monomethyl ester (MgPMME). The chain is Magnesium-protoporphyrin IX monomethyl ester [oxidative] cyclase from Synechococcus sp. (strain CC9311).